The sequence spans 454 residues: Bifunctional protein GlmU (454 aa).

The segment at 1–228 (MNKCAIILAA…FEETLGVNSR (228 aa)) is pyrophosphorylase. Residues 8-11 (LAAG), Lys22, Gln73, and 78-79 (GT) each bind UDP-N-acetyl-alpha-D-glucosamine. Mg(2+) is bound at residue Asp103. UDP-N-acetyl-alpha-D-glucosamine contacts are provided by Gly140, Glu154, Asn169, and Asn226. Asn226 is a Mg(2+) binding site. A linker region spans residues 229–249 (AELAKVESIMRNRINRTHLDN). Positions 250–454 (GVTIIDPLNT…EGWVERKKLK (205 aa)) are N-acetyltransferase. UDP-N-acetyl-alpha-D-glucosamine-binding residues include Arg331 and Lys349. The Proton acceptor role is filled by His361. 2 residues coordinate UDP-N-acetyl-alpha-D-glucosamine: Tyr364 and Asn375. Residues 384–385 (NY), Ala421, and Arg438 each bind acetyl-CoA.

In the N-terminal section; belongs to the N-acetylglucosamine-1-phosphate uridyltransferase family. It in the C-terminal section; belongs to the transferase hexapeptide repeat family. Homotrimer. Mg(2+) serves as cofactor.

The protein resides in the cytoplasm. It catalyses the reaction alpha-D-glucosamine 1-phosphate + acetyl-CoA = N-acetyl-alpha-D-glucosamine 1-phosphate + CoA + H(+). The enzyme catalyses N-acetyl-alpha-D-glucosamine 1-phosphate + UTP + H(+) = UDP-N-acetyl-alpha-D-glucosamine + diphosphate. The protein operates within nucleotide-sugar biosynthesis; UDP-N-acetyl-alpha-D-glucosamine biosynthesis; N-acetyl-alpha-D-glucosamine 1-phosphate from alpha-D-glucosamine 6-phosphate (route II): step 2/2. Its pathway is nucleotide-sugar biosynthesis; UDP-N-acetyl-alpha-D-glucosamine biosynthesis; UDP-N-acetyl-alpha-D-glucosamine from N-acetyl-alpha-D-glucosamine 1-phosphate: step 1/1. It functions in the pathway bacterial outer membrane biogenesis; LPS lipid A biosynthesis. In terms of biological role, catalyzes the last two sequential reactions in the de novo biosynthetic pathway for UDP-N-acetylglucosamine (UDP-GlcNAc). The C-terminal domain catalyzes the transfer of acetyl group from acetyl coenzyme A to glucosamine-1-phosphate (GlcN-1-P) to produce N-acetylglucosamine-1-phosphate (GlcNAc-1-P), which is converted into UDP-GlcNAc by the transfer of uridine 5-monophosphate (from uridine 5-triphosphate), a reaction catalyzed by the N-terminal domain. This Clostridium perfringens (strain ATCC 13124 / DSM 756 / JCM 1290 / NCIMB 6125 / NCTC 8237 / Type A) protein is Bifunctional protein GlmU.